Consider the following 531-residue polypeptide: RCC1 and BTB domain-containing protein 1 (531 aa).

6 RCC1 repeats span residues 40–91 (NDEV…LLST), 93–145 (DGVV…ALAA), 147–198 (GEVF…AVLD), 199–250 (NGEV…ALTD), 252–302 (GLLY…AAKT), and 304–356 (GGHV…FLTV). BTB domains lie at 370-437 (ADLK…DLPP) and 470-499 (ENAF…INHL).

In terms of tissue distribution, ubiquitously expressed. In the retina, present in the nerve fiber layer and to a lesser extent in the inner and outer plexiform layers (at protein level).

It localises to the nucleus. Functionally, may be involved in cell cycle regulation by chromatin remodeling. This Homo sapiens (Human) protein is RCC1 and BTB domain-containing protein 1 (RCBTB1).